A 145-amino-acid chain; its full sequence is Chaperonin GroEL (145 aa).

It belongs to the chaperonin (HSP60) family. In terms of assembly, forms a cylinder of 14 subunits composed of two heptameric rings stacked back-to-back. Interacts with the co-chaperonin GroES.

The protein resides in the cytoplasm. The catalysed reaction is ATP + H2O + a folded polypeptide = ADP + phosphate + an unfolded polypeptide.. In terms of biological role, together with its co-chaperonin GroES, plays an essential role in assisting protein folding. The GroEL-GroES system forms a nano-cage that allows encapsulation of the non-native substrate proteins and provides a physical environment optimized to promote and accelerate protein folding. This is Chaperonin GroEL from Thermus thermophilus.